A 434-amino-acid chain; its full sequence is Zinc carboxypeptidase (434 aa).

A signal peptide spans 1 to 33; the sequence is MSPKRRRLMAAALGACVALVLPLHAGSAQPSTA. Residues 34-114 constitute a propeptide, activation peptide; that stretch reads KTPERTVFEV…DFTDPQVGTQ (81 aa). Residues 122-423 form the Peptidase M14 domain; it reads GYHNFQETVT…SAVELFLSYS (302 aa). Residues H183 and E186 each coordinate Zn(2+). Residues 270-295 are disordered; sequence GSSSSGSSETTAARRRSPPRRSPHPH. The span at 282-293 shows a compositional bias: basic residues; the sequence is ARRRSPPRRSPH. H315 contacts Zn(2+). The active-site Proton donor/acceptor is E388.

Belongs to the peptidase M14 family. Zn(2+) serves as cofactor.

The enzyme catalyses Releases a C-terminal residue, which may be hydrophobic or positively charged.. In terms of biological role, carboxypeptidase that possesses the specificities of both mammalian Cpase A and B. Thus shows broad substrate specificity, being able to cleave Cbz-Gly-Leu, Cbz-Gly-Val, Cbz-Gly-Phe, Cbz-Gly-Lys and Bz-Gly-Arg in vitro. The sequence is that of Zinc carboxypeptidase from Saccharothrix mutabilis subsp. capreolus (Streptomyces capreolus).